The following is a 257-amino-acid chain: 3-deoxy-manno-octulosonate cytidylyltransferase (257 aa).

Belongs to the KdsB family.

The protein localises to the cytoplasm. It catalyses the reaction 3-deoxy-alpha-D-manno-oct-2-ulosonate + CTP = CMP-3-deoxy-beta-D-manno-octulosonate + diphosphate. The protein operates within nucleotide-sugar biosynthesis; CMP-3-deoxy-D-manno-octulosonate biosynthesis; CMP-3-deoxy-D-manno-octulosonate from 3-deoxy-D-manno-octulosonate and CTP: step 1/1. It participates in bacterial outer membrane biogenesis; lipopolysaccharide biosynthesis. Its function is as follows. Activates KDO (a required 8-carbon sugar) for incorporation into bacterial lipopolysaccharide in Gram-negative bacteria. The polypeptide is 3-deoxy-manno-octulosonate cytidylyltransferase (Chromohalobacter salexigens (strain ATCC BAA-138 / DSM 3043 / CIP 106854 / NCIMB 13768 / 1H11)).